Here is a 285-residue protein sequence, read N- to C-terminus: Undecaprenyl-diphosphatase (285 aa).

Transmembrane regions (helical) follow at residues Ile3 to Pro23, Gly41 to Trp61, Leu87 to Glu107, Leu109 to Val129, Thr197 to Ile217, Gly226 to Ile246, and Val260 to Trp280.

It belongs to the UppP family.

It localises to the cell inner membrane. It carries out the reaction di-trans,octa-cis-undecaprenyl diphosphate + H2O = di-trans,octa-cis-undecaprenyl phosphate + phosphate + H(+). Its function is as follows. Catalyzes the dephosphorylation of undecaprenyl diphosphate (UPP). Confers resistance to bacitracin. The polypeptide is Undecaprenyl-diphosphatase (Methylibium petroleiphilum (strain ATCC BAA-1232 / LMG 22953 / PM1)).